Consider the following 253-residue polypeptide: MDAAGGDQLSLAAVRDALVRLEDSVVFALIERARHPRNAPAYAPAATAGEHSLVEFFVREAEALNAKAGHYQKPEDVPFFPQDLPSPLFPTKPSPKVLHPFASLVTVNDAIWKMYFDELLPLFTVDGDDGSYAQTVALDLACLQVLSQRIHIGKYVAEVKFKDAPQEYSRLIKEKDSNSLMDMLTFKAVEEKVKKRVEKKARTFGQNVTLDDNATAGDSECKVDPKVLSKLYDQWVMPLTKDVEVEYLLRRLD.

One can recognise a Chorismate mutase domain in the interval 2–253 (DAAGGDQLSL…EVEYLLRRLD (252 aa)).

Homodimer. Interacts with Cmu1 of the fungal pathogen Ustilago maydis.

It is found in the cytoplasm. Its subcellular location is the cytosol. The enzyme catalyses chorismate = prephenate. The protein operates within metabolic intermediate biosynthesis; prephenate biosynthesis; prephenate from chorismate: step 1/1. Its activity is regulated as follows. No allosteric regulation. This Zea mays (Maize) protein is Chorismate mutase 2, cytosolic.